The primary structure comprises 44 residues: GKVWDWIKSTAKKLWNSEPVKELKNTALNAAKNFVAEKIGATPS.

Expressed by the venom gland.

It is found in the secreted. It localises to the target cell membrane. Functionally, at high concentrations, acts as a pore former in cellular membranes and causes the leakage of the cells. At submicromolar concentrations, degranulates granulocytes and has a weak hemolytic activity against human erythrocytes. Also strongly inhibits the production of superoxide anions. Has a strong antibacterial activity against Gram-negative bacteria but is less active against Gram-positive bacteria. Also has antifungal activity. The sequence is that of Opistoporin-2 from Opistophthalmus carinatus (African yellow leg scorpion).